Here is a 492-residue protein sequence, read N- to C-terminus: MKKGSLGIVETKYYHLEEELKLESGRKISDVTIAYEAYGTLNRDKNNVILVCHALTGDAHAAGWHKGDNKPGWWDILIGPGKCLDTDKYFIVCSNVIGGCRGSTGPSSIDPETGKPYGLSFPVITIKDMVNAQKKLLDHLGISSIYAVIGGSMGGLQVLQWSVSYPDYINKAIALAASAYSSPQQIAFNEVARIAIISDPEWNKGNYYYSRQPSHGLALARMIGHITYLSDESMREKFGRELQDRDRYNYDLSMDFQVESYLHYKGRSFTERFDANSYLYITKAVDYFDLTENGSLIDGLKDIKAKCLIIAVTSDWLYPPYQSKDIVMALNANNVDVTYREIESNYGHDAFLLEAGQLNYVIGGFLNNITVSDIMKLDVVTVQEDISIEDAAQIMFDNGITHLPVVSDDEQIRGIITSWDISKAVALKFTTLDRILTKNVITSRPDEGIEKCARKMQNNNISALPVIDENRKVIGIIGSDEINKMIGNHRCT.

An AB hydrolase-1 domain is found at 47-354 (NVILVCHALT…NYGHDAFLLE (308 aa)). The active-site Nucleophile is Ser-152. Residue Arg-221 participates in substrate binding. Residues Asp-315 and His-348 contribute to the active site. Asp-349 contributes to the substrate binding site. 2 consecutive CBS domains span residues 375–432 (MKLD…FTTL) and 436–492 (LTKN…HRCT).

The protein belongs to the AB hydrolase superfamily. MetX family. In terms of assembly, homodimer.

Its subcellular location is the cytoplasm. It carries out the reaction L-homoserine + acetyl-CoA = O-acetyl-L-homoserine + CoA. The protein operates within amino-acid biosynthesis; L-methionine biosynthesis via de novo pathway; O-acetyl-L-homoserine from L-homoserine: step 1/1. Its function is as follows. Transfers an acetyl group from acetyl-CoA to L-homoserine, forming acetyl-L-homoserine. This Methanosalsum zhilinae (strain DSM 4017 / NBRC 107636 / OCM 62 / WeN5) (Methanohalophilus zhilinae) protein is Homoserine O-acetyltransferase.